The sequence spans 139 residues: uncharacterized protein (139 aa).

Positions 5–114 (IFCKIINKEL…IPRFKNDGFG (110 aa)) constitute an HIT domain. The Histidine triad motif signature appears at 99–103 (HTHFH).

This is an uncharacterized protein from Borreliella burgdorferi (strain ATCC 35210 / DSM 4680 / CIP 102532 / B31) (Borrelia burgdorferi).